Consider the following 479-residue polypeptide: B-cell CLL/lymphoma 6 member B protein (479 aa).

A BTB domain is found at 38-105; that stretch reads TDVTLLVGGQ…MYTSRLRLSP (68 aa). 2 disordered regions span residues 143–190 and 210–259; these read RPLE…PDPK and GSLV…LSPT. Residues 147–160 are compositionally biased toward pro residues; it reads AEPPTPPTAPPPGS. Residues 162-172 are compositionally biased toward basic and acidic residues; that stretch reads RRSEGHPDPPT. Low complexity predominate over residues 234–244; sequence SSSSSSSSSSS. 5 consecutive C2H2-type zinc fingers follow at residues 328 to 350, 356 to 378, 384 to 406, 412 to 434, and 440 to 463; these read YKCQ…RTVH, YHCS…SRIH, YKCE…VLIH, YPCP…VRIH, and YHCD…RQKH.

As to quaternary structure, associates with BCL6 through the BTB domain. As to expression, ubiquitously expressed with higher expression found in heart and placenta.

Its subcellular location is the nucleus. In terms of biological role, acts as a sequence-specific transcriptional repressor in association with BCL6. May function in a narrow stage or be related to some events in the early B-cell development. This is B-cell CLL/lymphoma 6 member B protein (BCL6B) from Homo sapiens (Human).